Here is a 177-residue protein sequence, read N- to C-terminus: ATP synthase subunit delta (177 aa).

The protein belongs to the ATPase delta chain family. F-type ATPases have 2 components, F(1) - the catalytic core - and F(0) - the membrane proton channel. F(1) has five subunits: alpha(3), beta(3), gamma(1), delta(1), epsilon(1). F(0) has three main subunits: a(1), b(2) and c(10-14). The alpha and beta chains form an alternating ring which encloses part of the gamma chain. F(1) is attached to F(0) by a central stalk formed by the gamma and epsilon chains, while a peripheral stalk is formed by the delta and b chains.

It is found in the cell inner membrane. Its function is as follows. F(1)F(0) ATP synthase produces ATP from ADP in the presence of a proton or sodium gradient. F-type ATPases consist of two structural domains, F(1) containing the extramembraneous catalytic core and F(0) containing the membrane proton channel, linked together by a central stalk and a peripheral stalk. During catalysis, ATP synthesis in the catalytic domain of F(1) is coupled via a rotary mechanism of the central stalk subunits to proton translocation. Functionally, this protein is part of the stalk that links CF(0) to CF(1). It either transmits conformational changes from CF(0) to CF(1) or is implicated in proton conduction. This Shewanella woodyi (strain ATCC 51908 / MS32) protein is ATP synthase subunit delta.